Here is a 219-residue protein sequence, read N- to C-terminus: Cytidylate kinase (219 aa).

Residue 10–18 (GPAAAGKST) participates in ATP binding.

It belongs to the cytidylate kinase family. Type 1 subfamily.

The protein localises to the cytoplasm. The enzyme catalyses CMP + ATP = CDP + ADP. It catalyses the reaction dCMP + ATP = dCDP + ADP. This is Cytidylate kinase from Staphylococcus aureus (strain bovine RF122 / ET3-1).